The primary structure comprises 50 residues: Insulin 2 (50 aa).

3 cysteine pairs are disulfide-bonded: C8/C36, C20/C49, and C35/C40.

Belongs to the insulin family. As to quaternary structure, heterodimer of a B chain and an A chain linked by two disulfide bonds.

The protein localises to the secreted. Functionally, insulin decreases blood glucose concentration. It increases cell permeability to monosaccharides, amino acids and fatty acids. It accelerates glycolysis, the pentose phosphate cycle, and glycogen synthesis in liver. The chain is Insulin 2 (ins2) from Batrachoididae sp. (Toadfish).